The sequence spans 154 residues: Deoxyuridine 5'-triphosphate nucleotidohydrolase (154 aa).

Residues 64-66, Asn-77, 81-83, and Lys-91 contribute to the substrate site; these read RSG and TVD. Residues 135–154 are disordered; the sequence is LADTTRGDGGHGSSGGHASL. A compositionally biased stretch (gly residues) spans 144–154; that stretch reads GHGSSGGHASL.

This sequence belongs to the dUTPase family. Homotrimer. Mg(2+) is required as a cofactor.

It catalyses the reaction dUTP + H2O = dUMP + diphosphate + H(+). Its pathway is pyrimidine metabolism; dUMP biosynthesis; dUMP from dCTP (dUTP route): step 2/2. This enzyme is involved in nucleotide metabolism: it produces dUMP, the immediate precursor of thymidine nucleotides and it decreases the intracellular concentration of dUTP so that uracil cannot be incorporated into DNA. The protein is Deoxyuridine 5'-triphosphate nucleotidohydrolase of Mycolicibacterium vanbaalenii (strain DSM 7251 / JCM 13017 / BCRC 16820 / KCTC 9966 / NRRL B-24157 / PYR-1) (Mycobacterium vanbaalenii).